Here is a 402-residue protein sequence, read N- to C-terminus: MQVLTNTKFETVAFQWPAGFYSDGIHIGLRRHKKDFGWLFSKVPASAAGTYTTNQFQAAPTKLTKQMIDQGHQLQGLLLNSAIANSCTGEQGWQNALQEQAWLANKLNVAPNLIGVASTGLIGAQLPMDKIKNGLPQLTPTKSDAVTYAVLTTDQHPKTVCVQCELSGQLVTLTGFAKGSGMIHPKMATMLGFVTTDAQIDGPVLQDMLSTNVDQTFNQITVDGDTSTNDMVVTLANGLADNPSLQAGTTDYDIFNQALHYVLGQLAKQIAADGEGATKLVECNVVHAATTFDGQQIAKAIVGSNLVKAAIFGEDPNWGRIISTIGATDADIDVATVDIEMNGVLLVQQSLAVDFDMAAVQATLRDNQIMIDVDLHHGTASGQAWGCDLTYNYVKINASYHT.

Substrate is bound by residues T152, K178, T189, E275, N397, and T402. The active-site Nucleophile is T189.

It belongs to the ArgJ family. As to quaternary structure, heterotetramer of two alpha and two beta chains.

It localises to the cytoplasm. It catalyses the reaction N(2)-acetyl-L-ornithine + L-glutamate = N-acetyl-L-glutamate + L-ornithine. The enzyme catalyses L-glutamate + acetyl-CoA = N-acetyl-L-glutamate + CoA + H(+). It participates in amino-acid biosynthesis; L-arginine biosynthesis; L-ornithine and N-acetyl-L-glutamate from L-glutamate and N(2)-acetyl-L-ornithine (cyclic): step 1/1. Its pathway is amino-acid biosynthesis; L-arginine biosynthesis; N(2)-acetyl-L-ornithine from L-glutamate: step 1/4. In terms of biological role, catalyzes two activities which are involved in the cyclic version of arginine biosynthesis: the synthesis of N-acetylglutamate from glutamate and acetyl-CoA as the acetyl donor, and of ornithine by transacetylation between N(2)-acetylornithine and glutamate. This chain is Arginine biosynthesis bifunctional protein ArgJ, found in Lactiplantibacillus plantarum (strain ATCC BAA-793 / NCIMB 8826 / WCFS1) (Lactobacillus plantarum).